The chain runs to 551 residues: Calcium-dependent protein kinase 3 (551 aa).

The interval 1 to 57 (MGNCCRSPAAAAREDVKSSHFPASAGKKKPHQARNGGVGGGGGGGGGGGGGGGAGQK) is disordered. A lipid anchor (N-myristoyl glycine) is attached at glycine 2. Residues 36–55 (GGVGGGGGGGGGGGGGGGAG) show a composition bias toward gly residues. The Protein kinase domain occupies 77 to 335 (YALDRELGRG…AKQVLEHPWL (259 aa)). ATP contacts are provided by residues 83–91 (LGRGEFGVT) and lysine 106. Aspartate 201 functions as the Proton acceptor in the catalytic mechanism. The interval 341 to 371 (APNVPLGDIVKSRLKQFSRMNRFKRRALRVI) is autoinhibitory domain. 4 consecutive EF-hand domains span residues 378 to 413 (EEVEDIKEMFKAMDTDNDGIVSYEELKSGIAKFGSH), 414 to 449 (LAESEVQMLIEAVDTNGKDALDYGEFLAVSLHLQRM), 450 to 485 (ANDEHLRRAFLFFDKDGNGYIEPEELREALVDDGAG), and 486 to 521 (DSMEVVNDILQEVDTDKDGKISYDEFVAMMKTGTDW). 17 residues coordinate Ca(2+): aspartate 391, aspartate 393, aspartate 395, glutamate 402, aspartate 427, asparagine 429, glutamate 438, aspartate 463, aspartate 465, asparagine 467, tyrosine 469, glutamate 474, aspartate 499, aspartate 501, aspartate 503, lysine 505, and glutamate 510.

The protein belongs to the protein kinase superfamily. Ser/Thr protein kinase family. CDPK subfamily. Expressed in roots and developing seeds.

Its subcellular location is the membrane. The catalysed reaction is L-seryl-[protein] + ATP = O-phospho-L-seryl-[protein] + ADP + H(+). The enzyme catalyses L-threonyl-[protein] + ATP = O-phospho-L-threonyl-[protein] + ADP + H(+). Its activity is regulated as follows. Activated by calcium. Autophosphorylation may play an important role in the regulation of the kinase activity. Its function is as follows. May play a role in signal transduction pathways that involve calcium as a second messenger. This Oryza sativa subsp. japonica (Rice) protein is Calcium-dependent protein kinase 3.